Here is a 213-residue protein sequence, read N- to C-terminus: Phosphoribosyl-dephospho-CoA transferase (213 aa).

Residues Asp135 and Asp137 contribute to the active site.

This sequence belongs to the MdcG family.

It catalyses the reaction apo-[malonate decarboxylase ACP] + 2'-(5''-triphospho-alpha-D-ribosyl)-3'-dephospho-CoA = holo-[malonate decarboxylase ACP] + diphosphate. In terms of biological role, transfers 2'-(5-triphosphoribosyl)-3'-dephosphocoenzyme-A to the apo-[acyl-carrier-protein] of the malonate decarboxylase to yield holo-[acyl-carrier-protein]. This is Phosphoribosyl-dephospho-CoA transferase from Xanthomonas axonopodis pv. citri (strain 306).